The following is a 149-amino-acid chain: Protein SprT-like (149 aa).

Positions 4–144 constitute a SprT-like domain; it reads TDYVKQVSLE…GLCRGKLLLV (141 aa). His64 lines the Zn(2+) pocket. Glu65 is an active-site residue. His68 is a binding site for Zn(2+).

This sequence belongs to the SprT family. Zn(2+) serves as cofactor.

Its subcellular location is the cytoplasm. In Streptococcus pneumoniae serotype 4 (strain ATCC BAA-334 / TIGR4), this protein is Protein SprT-like.